A 294-amino-acid chain; its full sequence is Nucleotide-binding protein Dtur_1129 (294 aa).

Position 10 to 17 (10 to 17 (GLSGAGKS)) interacts with ATP. 61-64 (DIRT) is a GTP binding site.

Belongs to the RapZ-like family.

Displays ATPase and GTPase activities. This is Nucleotide-binding protein Dtur_1129 from Dictyoglomus turgidum (strain DSM 6724 / Z-1310).